The primary structure comprises 277 residues: Sulfate transport system permease protein CysT (277 aa).

The next 7 membrane-spanning stretches (helical) occupy residues 17-37 (LGTSLLFVCLILLLPLSALVM), 64-84 (LLAAFVASIFNGVFGLLMAWI), 99-119 (LMDLPFALPTAVAGLTLASLF), 136-156 (VTYTWLGIAVAMAFTSIPFVV), 188-205 (VVLPELSPALIAGVALSF), 215-235 (VIFIAGNIAWKTEVTSLMIFV), and 243-263 (PAASAIASVILAASLLLLFSI). An ABC transmembrane type-1 domain is found at 60–263 (YKVTLLAAFV…AASLLLLFSI (204 aa)).

It belongs to the binding-protein-dependent transport system permease family. CysTW subfamily. The complex is composed of two ATP-binding proteins (CysA), two transmembrane proteins (CysT and CysW) and a solute-binding protein (CysP).

The protein resides in the cell inner membrane. Functionally, part of the ABC transporter complex CysAWTP (TC 3.A.1.6.1) involved in sulfate/thiosulfate import. Probably responsible for the translocation of the substrate across the membrane. The protein is Sulfate transport system permease protein CysT (cysU) of Salmonella typhimurium (strain LT2 / SGSC1412 / ATCC 700720).